A 258-amino-acid chain; its full sequence is Probable splicing factor, arginine/serine-rich 3 (258 aa).

Residues 9–83 (QKVYVGNLPG…RRIRVEFTRG (75 aa)) enclose the RRM 1 domain. 2 disordered regions span residues 81 to 120 (TRGVGPRGPGGRPLQDGGDHRGGDFRGGRGGGRGGGPQRR) and 190 to 258 (AYIR…PSPQ). A compositionally biased stretch (basic and acidic residues) spans 97–107 (GGDHRGGDFRG). A compositionally biased stretch (gly residues) spans 108–117 (GRGGGRGGGP). The region spanning 123–197 (YRVIVEGLPP…ETAYIRVRED (75 aa)) is the RRM 2 domain. The span at 208-223 (GRDRSRSRSPRAERRA) shows a compositional bias: basic and acidic residues. Residues 228–246 (SPRRSRSRSRSRSRSRSRS) are compositionally biased toward basic residues. Residues 247 to 258 (ASRSPSRSPSPQ) show a composition bias toward low complexity.

This sequence belongs to the splicing factor SR family. Interacts with spk-1. In terms of processing, directly phosphorylated by spk-1 in vitro on serine residues of the RS domain. In terms of tissue distribution, predominantly coexpressed with spk-1 in adult hermaphrodite germlines.

Its subcellular location is the nucleus. Plays an essential role in embryogenesis. This is Probable splicing factor, arginine/serine-rich 3 (rsp-3) from Caenorhabditis elegans.